A 166-amino-acid chain; its full sequence is Small ribosomal subunit protein uS9 (166 aa).

A compositionally biased stretch (acidic residues) spans 1–16 (MSDTTNEVEETYEVDE). A disordered region spans residues 1-45 (MSDTTNEVEETYEVDEQGIAYSSESAPSADAPLRPATIAPANATG).

This sequence belongs to the universal ribosomal protein uS9 family.

The sequence is that of Small ribosomal subunit protein uS9 from Nocardioides sp. (strain ATCC BAA-499 / JS614).